Here is a 196-residue protein sequence, read N- to C-terminus: Pro-FMRFamide-related neuropeptide VF (196 aa).

An N-terminal signal peptide occupies residues 1 to 21 (MEIISLKRFILLMLATSSLLT). A propeptide spanning residues 22–57 (SNIFCTDESRMPNLYSKKNYDKYSEPRGDLGWEKER) is cleaved from the precursor. Position 92 is a phenylalanine amide (F92). 2 propeptides span residues 95–99 (NMEEE) and 115–121 (NREDSLS). Residue F131 is modified to Phenylalanine amide. The propeptide occupies 134–196 (TTTAKSITKT…IDDAELKQEK (63 aa)).

The protein belongs to the FARP (FMRFamide related peptide) family.

It is found in the secreted. Efficiently inhibits forskolin-induced production of cAMP. Acts as a potent negative regulator of gonadotropin synthesis and secretion. Induces secretion of prolactin. Functionally, efficiently inhibits forskolin-induced production of cAMP. Blocks morphine-induced analgesia. In terms of biological role, shows no inhibitory activity of forskolin-induced production of cAMP. The polypeptide is Pro-FMRFamide-related neuropeptide VF (NPVF) (Bos taurus (Bovine)).